Reading from the N-terminus, the 69-residue chain is Large ribosomal subunit protein bL31 (69 aa).

Residues cysteine 17, cysteine 19, cysteine 37, and cysteine 40 each contribute to the Zn(2+) site.

Belongs to the bacterial ribosomal protein bL31 family. Type A subfamily. As to quaternary structure, part of the 50S ribosomal subunit. Zn(2+) is required as a cofactor.

Binds the 23S rRNA. This is Large ribosomal subunit protein bL31 from Caldicellulosiruptor saccharolyticus (strain ATCC 43494 / DSM 8903 / Tp8T 6331).